We begin with the raw amino-acid sequence, 479 residues long: Glutamyl-tRNA(Gln) amidotransferase subunit A (479 aa).

Active-site charge relay system residues include lysine 75 and serine 150. Serine 174 serves as the catalytic Acyl-ester intermediate.

It belongs to the amidase family. GatA subfamily. Heterotrimer of A, B and C subunits.

The catalysed reaction is L-glutamyl-tRNA(Gln) + L-glutamine + ATP + H2O = L-glutaminyl-tRNA(Gln) + L-glutamate + ADP + phosphate + H(+). Allows the formation of correctly charged Gln-tRNA(Gln) through the transamidation of misacylated Glu-tRNA(Gln) in organisms which lack glutaminyl-tRNA synthetase. The reaction takes place in the presence of glutamine and ATP through an activated gamma-phospho-Glu-tRNA(Gln). This Synechococcus sp. (strain ATCC 27144 / PCC 6301 / SAUG 1402/1) (Anacystis nidulans) protein is Glutamyl-tRNA(Gln) amidotransferase subunit A.